Reading from the N-terminus, the 541-residue chain is Chaperonin GroEL 1 (541 aa).

Residues 29 to 32 (TLGP), 86 to 90 (DGTTT), G413, 478 to 480 (NAA), and D494 contribute to the ATP site. The disordered stretch occupies residues 520–541 (VVEKPAEAEDDGHGHGHGHHHH). The span at 523 to 533 (KPAEAEDDGHG) shows a compositional bias: basic and acidic residues.

Belongs to the chaperonin (HSP60) family. Forms a cylinder of 14 subunits composed of two heptameric rings stacked back-to-back. Interacts with the co-chaperonin GroES.

Its subcellular location is the cytoplasm. The catalysed reaction is ATP + H2O + a folded polypeptide = ADP + phosphate + an unfolded polypeptide.. In terms of biological role, together with its co-chaperonin GroES, plays an essential role in assisting protein folding. The GroEL-GroES system forms a nano-cage that allows encapsulation of the non-native substrate proteins and provides a physical environment optimized to promote and accelerate protein folding. The chain is Chaperonin GroEL 1 from Mycolicibacterium gilvum (strain PYR-GCK) (Mycobacterium gilvum (strain PYR-GCK)).